A 273-amino-acid chain; its full sequence is 4-hydroxy-tetrahydrodipicolinate reductase (273 aa).

Residues 8–13 (GCAGNM), Glu-34, 102–104 (GTT), and 128–131 (SPNM) each bind NAD(+). The Proton donor/acceptor role is filled by His-161. His-162 is a (S)-2,3,4,5-tetrahydrodipicolinate binding site. Lys-165 acts as the Proton donor in catalysis. Position 171 to 172 (171 to 172 (GT)) interacts with (S)-2,3,4,5-tetrahydrodipicolinate.

Belongs to the DapB family.

The protein resides in the cytoplasm. It catalyses the reaction (S)-2,3,4,5-tetrahydrodipicolinate + NAD(+) + H2O = (2S,4S)-4-hydroxy-2,3,4,5-tetrahydrodipicolinate + NADH + H(+). It carries out the reaction (S)-2,3,4,5-tetrahydrodipicolinate + NADP(+) + H2O = (2S,4S)-4-hydroxy-2,3,4,5-tetrahydrodipicolinate + NADPH + H(+). It functions in the pathway amino-acid biosynthesis; L-lysine biosynthesis via DAP pathway; (S)-tetrahydrodipicolinate from L-aspartate: step 4/4. Functionally, catalyzes the conversion of 4-hydroxy-tetrahydrodipicolinate (HTPA) to tetrahydrodipicolinate. In Methanosphaera stadtmanae (strain ATCC 43021 / DSM 3091 / JCM 11832 / MCB-3), this protein is 4-hydroxy-tetrahydrodipicolinate reductase.